Reading from the N-terminus, the 427-residue chain is 12-alpha,13-alpha-dihydroxyfumitremorgin C prenyltransferase (427 aa).

Glu94 contributes to the substrate binding site. Residues Arg105, Lys192, Tyr194, Tyr268, Gln353, Tyr355, Tyr419, and Tyr423 each contribute to the dimethylallyl diphosphate site.

The protein belongs to the tryptophan dimethylallyltransferase family.

It catalyses the reaction 12alpha,13alpha-dihydroxyfumitremorgin C + dimethylallyl diphosphate = fumitremorgin B + diphosphate. Its pathway is mycotoxin biosynthesis. Functionally, 12-alpha,13-alpha-dihydroxyfumitremorgin C prenyltransferase; part of the gene cluster that mediates the biosynthesis of fumitremorgins, indole alkaloids that carry not only intriguing chemical structures, but also interesting biological and pharmacological activities. The biosynthesis of fumitremorgin-type alkaloids begins by condensation of the two amino acids L-tryptophan and L-proline to brevianamide F, catalyzed by the non-ribosomal peptide synthetase ftmA. Brevianamide F is then prenylated by the prenyltransferase ftmPT1/ftmB in the presence of dimethylallyl diphosphate, resulting in the formation of tryprostatin B. The three cytochrome P450 monooxygenases, ftmP450-1/ftmC, ftmP450-2/ftmE and ftmP450-3/FtmG, are responsible for the conversion of tryprostatin B to 6-hydroxytryprostatin B, tryprostatin A to fumitremorgin C and fumitremorgin C to 12,13-dihydroxyfumitremorgin C, respectively. The putative methyltransferase ftmMT/ftmD is expected for the conversion of 6-hydroxytryprostatin B to tryprostatin A. FtmPT2/FtmH catalyzes the prenylation of 12,13-dihydroxyfumitre-morgin C in the presence of dimethylallyl diphosphate, resulting in the formation of fumitremorgin B. Fumitremorgin B is further converted to verruculogen by ftmOx1/ftmF via the insertion of an endoperoxide bond between the two prenyl moieties. In some fungal species, verruculogen is further converted to fumitremorgin A, but the enzymes involved in this step have not been identified yet. The chain is 12-alpha,13-alpha-dihydroxyfumitremorgin C prenyltransferase from Aspergillus fumigatus (strain ATCC MYA-4609 / CBS 101355 / FGSC A1100 / Af293) (Neosartorya fumigata).